The primary structure comprises 352 residues: Ketoisovalerate oxidoreductase subunit VorB (352 aa).

In terms of assembly, heterotrimer of the VorA, VorB and VorC subunits.

The enzyme catalyses 3-methyl-2-oxobutanoate + 2 oxidized [2Fe-2S]-[ferredoxin] + CoA = 2-methylpropanoyl-CoA + 2 reduced [2Fe-2S]-[ferredoxin] + CO2 + H(+). In Methanothermobacter marburgensis (strain ATCC BAA-927 / DSM 2133 / JCM 14651 / NBRC 100331 / OCM 82 / Marburg) (Methanobacterium thermoautotrophicum), this protein is Ketoisovalerate oxidoreductase subunit VorB (vorB).